Here is a 534-residue protein sequence, read N- to C-terminus: Chaperonin GroEL, chloroplastic (534 aa).

Residues 29–32 (TLGP), 86–90 (DGTTT), Gly414, and Asp496 each bind ATP.

This sequence belongs to the chaperonin (HSP60) family. As to quaternary structure, forms a cylinder of 14 subunits composed of two heptameric rings stacked back-to-back. Interacts with the co-chaperonin GroES.

Its subcellular location is the plastid. The protein resides in the chloroplast. The enzyme catalyses ATP + H2O + a folded polypeptide = ADP + phosphate + an unfolded polypeptide.. Its function is as follows. Together with its co-chaperonin GroES, plays an essential role in assisting protein folding. The GroEL-GroES system forms a nano-cage that allows encapsulation of the non-native substrate proteins and provides a physical environment optimized to promote and accelerate protein folding. This is Chaperonin GroEL, chloroplastic from Galdieria sulphuraria (Red alga).